We begin with the raw amino-acid sequence, 330 residues long: Poly(3-hydroxyalkanoate) polymerase subunit PhaE (330 aa).

A coiled-coil region spans residues 298–328 (RSEVDEIHQTIYQLRKEVKSLKKRLGETEAN).

It belongs to the PHA/PHB synthase family. Type III PhaE subfamily. As to quaternary structure, forms a heterodimer with PhaC, which may multimerize in the presence of 3-hydroxybutyryl-CoA. Both subunits are required for PHB synthesis in E.coli and in PHA-negative A.eutrophus.

Its subcellular location is the cytoplasm. Its pathway is biopolymer metabolism; poly-(R)-3-hydroxybutanoate biosynthesis. When expressed in E.coli with Synechocystis PhaC and C.necator PhaA and PhaB, confers the ability to synthesize up to 13% (w/w) poly(3-hydroxybutyrate) (PHB) depending on the carbon source; all 4 genes are necessary for PHB production. Cell-free in vitro coexpression with PhaE gives a heterodimer able to polymerize 3-hydroxybutyrate-CoA. This subunit has no catalytic activity but enhances the activity of PhaC, the catalytic subunit. This Synechocystis sp. (strain ATCC 27184 / PCC 6803 / Kazusa) protein is Poly(3-hydroxyalkanoate) polymerase subunit PhaE.